The primary structure comprises 548 residues: Chaperonin GroEL (548 aa).

Residues Thr-30–Pro-33, Lys-51, Asp-87–Thr-91, Gly-415, Asn-479–Ala-481, and Asp-495 each bind ATP.

Belongs to the chaperonin (HSP60) family. As to quaternary structure, forms a cylinder of 14 subunits composed of two heptameric rings stacked back-to-back. Interacts with the co-chaperonin GroES.

It is found in the cytoplasm. The catalysed reaction is ATP + H2O + a folded polypeptide = ADP + phosphate + an unfolded polypeptide.. Functionally, together with its co-chaperonin GroES, plays an essential role in assisting protein folding. The GroEL-GroES system forms a nano-cage that allows encapsulation of the non-native substrate proteins and provides a physical environment optimized to promote and accelerate protein folding. This Pseudomonas fluorescens (strain SBW25) protein is Chaperonin GroEL.